Consider the following 612-residue polypeptide: Isocitrate dehydrogenase kinase/phosphatase (612 aa).

ATP contacts are provided by residues 327 to 333 (APGIKGL) and Lys-348. Asp-383 is an active-site residue. The interval 593–612 (AGRASPEPDAPADARSVRVA) is disordered.

Belongs to the AceK family.

It is found in the cytoplasm. It carries out the reaction L-seryl-[isocitrate dehydrogenase] + ATP = O-phospho-L-seryl-[isocitrate dehydrogenase] + ADP + H(+). Functionally, bifunctional enzyme which can phosphorylate or dephosphorylate isocitrate dehydrogenase (IDH) on a specific serine residue. This is a regulatory mechanism which enables bacteria to bypass the Krebs cycle via the glyoxylate shunt in response to the source of carbon. When bacteria are grown on glucose, IDH is fully active and unphosphorylated, but when grown on acetate or ethanol, the activity of IDH declines drastically concomitant with its phosphorylation. The sequence is that of Isocitrate dehydrogenase kinase/phosphatase from Paraburkholderia phytofirmans (strain DSM 17436 / LMG 22146 / PsJN) (Burkholderia phytofirmans).